The chain runs to 150 residues: Cyanate hydratase (150 aa).

Catalysis depends on residues R91, E94, and S117.

It belongs to the cyanase family.

It catalyses the reaction cyanate + hydrogencarbonate + 3 H(+) = NH4(+) + 2 CO2. In terms of biological role, catalyzes the reaction of cyanate with bicarbonate to produce ammonia and carbon dioxide. In Synechococcus sp. (strain CC9311), this protein is Cyanate hydratase.